The following is a 243-amino-acid chain: Sarcospan (243 aa).

Residues 1–43 (MGKNKQPRGQQRQGGPPAADAAGPDDMEPKKGTGAPKECGEEE) form a disordered region. At 1–53 (MGKNKQPRGQQRQGGPPAADAAGPDDMEPKKGTGAPKECGEEEPRTCCGCRFP) the chain is on the cytoplasmic side. Low complexity predominate over residues 7–24 (PRGQQRQGGPPAADAAGP). A helical membrane pass occupies residues 54–74 (LLLALLQLALGIAVTVVGFLM). Topologically, residues 75-86 (ASISSSLLVRDT) are extracellular. The helical transmembrane segment at 87-107 (PFWAGIIVCLVAYLGLFMLCV) threads the bilayer. Topologically, residues 108-122 (SYQVDERTCIQFSMK) are cytoplasmic. Residues 123-143 (LLYFLLSALGLTVCVLAVAFA) traverse the membrane as a helical segment. Residues 144–193 (AHHYSQLTQFTCETTLDSCQCKLPSSEPLSRTFVYRDVTDCTSVTGTFKL) lie on the Extracellular side of the membrane. Residues 194 to 214 (FLLIQMILNLVCGLVCLLACF) traverse the membrane as a helical segment. Residues 215–243 (VMWKHRYQVFYVGVRICSLTASEGPQQKI) lie on the Cytoplasmic side of the membrane.

Isoform 1 is expressed exclusively in heart and skeletal muscle. Isoform 2 is expressed in heart, skeletal muscle, thymus, prostate, testis, ovary, small intestine, colon and spleen.

The protein resides in the cell membrane. It localises to the sarcolemma. The protein localises to the postsynaptic cell membrane. Component of the dystrophin-glycoprotein complex (DGC), a complex that spans the muscle plasma membrane and forms a link between the F-actin cytoskeleton and the extracellular matrix. Preferentially associates with the sarcoglycan subcomplex of the DGC. This chain is Sarcospan (SSPN), found in Homo sapiens (Human).